The primary structure comprises 1241 residues: ATP-dependent helicase/nuclease subunit A (1241 aa).

Residues 12-485 form the UvrD-like helicase ATP-binding domain; that stretch reads SQWTDDQWKA…IDLAKNFRSR (474 aa). Residue 33–40 participates in ATP binding; sequence AAAGSGKT. In terms of domain architecture, UvrD-like helicase C-terminal spans 505–805; it reads GEIDYDADAE…RIMTIHKSKG (301 aa).

The protein belongs to the helicase family. AddA subfamily. In terms of assembly, heterodimer of AddA and AddB/RexB. Mg(2+) serves as cofactor.

The catalysed reaction is Couples ATP hydrolysis with the unwinding of duplex DNA by translocating in the 3'-5' direction.. It carries out the reaction ATP + H2O = ADP + phosphate + H(+). Functionally, the heterodimer acts as both an ATP-dependent DNA helicase and an ATP-dependent, dual-direction single-stranded exonuclease. Recognizes the chi site generating a DNA molecule suitable for the initiation of homologous recombination. The AddA nuclease domain is required for chi fragment generation; this subunit has the helicase and 3' -&gt; 5' nuclease activities. This is ATP-dependent helicase/nuclease subunit A from Bacillus thuringiensis (strain Al Hakam).